The chain runs to 459 residues: Probable rhamnogalacturonase C (459 aa).

The N-terminal stretch at 1–18 (MRASILPLTLFLATLAGA) is a signal peptide. N-linked (GlcNAc...) asparagine glycans are attached at residues Asn-36, Asn-64, Asn-77, Asn-140, and Asn-155. Cys-39 and Cys-65 are joined by a disulfide. Residue Asp-216 is the Proton donor of the active site. Cys-218 and Cys-235 are joined by a disulfide. N-linked (GlcNAc...) asparagine glycans are attached at residues Asn-236 and Asn-251. His-290 is an active-site residue. An N-linked (GlcNAc...) asparagine glycan is attached at Asn-315. A disulfide bridge links Cys-337 with Cys-343. Residue Asn-356 is glycosylated (N-linked (GlcNAc...) asparagine). A disulfide bond links Cys-365 and Cys-374.

It belongs to the glycosyl hydrolase 28 family.

It is found in the secreted. In terms of biological role, pectinolytic enzymes consist of four classes of enzymes: pectine lyase, polygalacturonase, pectin methylesterase and rhamnogalacturonase. Hydrolyzes alpha-D-galacturonopyranosyl-(1,2)-alpha-L-rhamnopyranosyl linkages in the backbone of the hairy regions of pectins. This chain is Probable rhamnogalacturonase C (rhgC), found in Aspergillus niger (strain ATCC MYA-4892 / CBS 513.88 / FGSC A1513).